A 448-amino-acid polypeptide reads, in one-letter code: Glutamyl-tRNA reductase (448 aa).

Substrate contacts are provided by residues 48 to 51 (TCNR), serine 100, 105 to 107 (EDQ), and glutamine 111. The active-site Nucleophile is the cysteine 49. 180–185 (GAGEIG) is a binding site for NADP(+).

The protein belongs to the glutamyl-tRNA reductase family. In terms of assembly, homodimer.

It catalyses the reaction (S)-4-amino-5-oxopentanoate + tRNA(Glu) + NADP(+) = L-glutamyl-tRNA(Glu) + NADPH + H(+). Its pathway is porphyrin-containing compound metabolism; protoporphyrin-IX biosynthesis; 5-aminolevulinate from L-glutamyl-tRNA(Glu): step 1/2. In terms of biological role, catalyzes the NADPH-dependent reduction of glutamyl-tRNA(Glu) to glutamate 1-semialdehyde (GSA). The protein is Glutamyl-tRNA reductase of Methanosarcina mazei (strain ATCC BAA-159 / DSM 3647 / Goe1 / Go1 / JCM 11833 / OCM 88) (Methanosarcina frisia).